The chain runs to 179 residues: Hypoxanthine-guanine phosphoribosyltransferase (179 aa).

The diphosphate site is built by K42 and G43. 2 residues coordinate Mg(2+): E98 and D99. The active-site Proton acceptor is the E102. Residues K130, 151-152 (FV), and D158 contribute to the GMP site. Diphosphate is bound at residue R164.

It belongs to the purine/pyrimidine phosphoribosyltransferase family. Mg(2+) serves as cofactor.

Its subcellular location is the cytoplasm. The enzyme catalyses IMP + diphosphate = hypoxanthine + 5-phospho-alpha-D-ribose 1-diphosphate. It carries out the reaction GMP + diphosphate = guanine + 5-phospho-alpha-D-ribose 1-diphosphate. It functions in the pathway purine metabolism; IMP biosynthesis via salvage pathway; IMP from hypoxanthine: step 1/1. It participates in purine metabolism; GMP biosynthesis via salvage pathway; GMP from guanine: step 1/1. In terms of biological role, purine salvage pathway enzyme that catalyzes the transfer of the ribosyl-5-phosphate group from 5-phospho-alpha-D-ribose 1-diphosphate (PRPP) to the N9 position of the 6-oxopurines hypoxanthine and guanine to form the corresponding ribonucleotides IMP (inosine 5'-monophosphate) and GMP (guanosine 5'-monophosphate), with the release of PPi. In Staphylococcus aureus (strain COL), this protein is Hypoxanthine-guanine phosphoribosyltransferase (hpt).